Reading from the N-terminus, the 225-residue chain is Ribosomal RNA small subunit methyltransferase G (225 aa).

S-adenosyl-L-methionine-binding positions include G84, F89, 107 to 109 (DST), 135 to 136 (AE), and R154.

It belongs to the methyltransferase superfamily. RNA methyltransferase RsmG family.

The protein localises to the cytoplasm. Its function is as follows. Specifically methylates the N7 position of a guanine in 16S rRNA. This Microcystis aeruginosa (strain NIES-843 / IAM M-2473) protein is Ribosomal RNA small subunit methyltransferase G.